The following is a 541-amino-acid chain: Chaperonin GroEL 1 (541 aa).

ATP-binding positions include 30–33, 87–91, G414, 478–480, and D494; these read TLGP, DGTTT, and NAA.

Belongs to the chaperonin (HSP60) family. In terms of assembly, forms a cylinder of 14 subunits composed of two heptameric rings stacked back-to-back. Interacts with the co-chaperonin GroES.

It is found in the cytoplasm. The enzyme catalyses ATP + H2O + a folded polypeptide = ADP + phosphate + an unfolded polypeptide.. Its function is as follows. Together with its co-chaperonin GroES, plays an essential role in assisting protein folding. The GroEL-GroES system forms a nano-cage that allows encapsulation of the non-native substrate proteins and provides a physical environment optimized to promote and accelerate protein folding. The sequence is that of Chaperonin GroEL 1 from Thermobifida fusca (strain YX).